A 160-amino-acid chain; its full sequence is uncharacterized protein (160 aa).

The protein localises to the plastid. This is an uncharacterized protein from Euglena longa (Euglenophycean alga).